A 288-amino-acid polypeptide reads, in one-letter code: 4-hydroxy-3-methylbut-2-enyl diphosphate reductase (288 aa).

Cys13 provides a ligand contact to [4Fe-4S] cluster. (2E)-4-hydroxy-3-methylbut-2-enyl diphosphate is bound by residues His41 and His75. Dimethylallyl diphosphate-binding residues include His41 and His75. The isopentenyl diphosphate site is built by His41 and His75. A [4Fe-4S] cluster-binding site is contributed by Cys97. His130 lines the (2E)-4-hydroxy-3-methylbut-2-enyl diphosphate pocket. A dimethylallyl diphosphate-binding site is contributed by His130. Isopentenyl diphosphate is bound at residue His130. Glu132 functions as the Proton donor in the catalytic mechanism. Thr168 lines the (2E)-4-hydroxy-3-methylbut-2-enyl diphosphate pocket. A [4Fe-4S] cluster-binding site is contributed by Cys199. 4 residues coordinate (2E)-4-hydroxy-3-methylbut-2-enyl diphosphate: Ser227, Ser228, Asn229, and Ser271. Dimethylallyl diphosphate-binding residues include Ser227, Ser228, Asn229, and Ser271. Residues Ser227, Ser228, Asn229, and Ser271 each coordinate isopentenyl diphosphate.

The protein belongs to the IspH family. [4Fe-4S] cluster serves as cofactor.

It carries out the reaction isopentenyl diphosphate + 2 oxidized [2Fe-2S]-[ferredoxin] + H2O = (2E)-4-hydroxy-3-methylbut-2-enyl diphosphate + 2 reduced [2Fe-2S]-[ferredoxin] + 2 H(+). It catalyses the reaction dimethylallyl diphosphate + 2 oxidized [2Fe-2S]-[ferredoxin] + H2O = (2E)-4-hydroxy-3-methylbut-2-enyl diphosphate + 2 reduced [2Fe-2S]-[ferredoxin] + 2 H(+). It functions in the pathway isoprenoid biosynthesis; dimethylallyl diphosphate biosynthesis; dimethylallyl diphosphate from (2E)-4-hydroxy-3-methylbutenyl diphosphate: step 1/1. The protein operates within isoprenoid biosynthesis; isopentenyl diphosphate biosynthesis via DXP pathway; isopentenyl diphosphate from 1-deoxy-D-xylulose 5-phosphate: step 6/6. Catalyzes the conversion of 1-hydroxy-2-methyl-2-(E)-butenyl 4-diphosphate (HMBPP) into a mixture of isopentenyl diphosphate (IPP) and dimethylallyl diphosphate (DMAPP). Acts in the terminal step of the DOXP/MEP pathway for isoprenoid precursor biosynthesis. The polypeptide is 4-hydroxy-3-methylbut-2-enyl diphosphate reductase (Phocaeicola vulgatus (strain ATCC 8482 / DSM 1447 / JCM 5826 / CCUG 4940 / NBRC 14291 / NCTC 11154) (Bacteroides vulgatus)).